A 341-amino-acid chain; its full sequence is UDP-glucose 4-epimerase (341 aa).

It belongs to the polysaccharide synthase family.

It carries out the reaction UDP-alpha-D-glucose = UDP-alpha-D-galactose. Functionally, epimerizes UDP-galactose to UDP-glucose. May contribute to formation of LPS or the exopolysaccharide slime layer by providing UDP-galactose as a substrate for either molecule. In Rickettsia prowazekii (strain Madrid E), this protein is UDP-glucose 4-epimerase (capD).